The sequence spans 317 residues: Small ribosomal subunit protein uS2 (317 aa).

The disordered stretch occupies residues 277-317 (SDWTAPAANPANAAAAGAPAPAPAAATTTESWGGSGAENWG). Residues 281–302 (APAANPANAAAAGAPAPAPAAA) are compositionally biased toward low complexity.

The protein belongs to the universal ribosomal protein uS2 family. In terms of assembly, component of the small ribosomal subunit. Mature ribosomes consist of a small (40S) and a large (60S) subunit. The 40S subunit contains about 33 different proteins and 1 molecule of RNA (18S). The 60S subunit contains about 49 different proteins and 3 molecules of RNA (28S, 5.8S and 5S). Interacts with ribosomal protein S21.

Its subcellular location is the cytoplasm. Its function is as follows. Required for the assembly and/or stability of the 40S ribosomal subunit. Required for the processing of the 20S rRNA-precursor to mature 18S rRNA in a late step of the maturation of 40S ribosomal subunits. The polypeptide is Small ribosomal subunit protein uS2 (Urechis caupo (Innkeeper worm)).